The sequence spans 279 residues: Energy-coupling factor transporter ATP-binding protein EcfA (279 aa).

In terms of domain architecture, ABC transporter spans 5-240 (IELEKINYKY…GPELIDLGLD (236 aa)). 40-47 (GHNGSGKS) is a binding site for ATP.

The protein belongs to the ABC transporter superfamily. Energy-coupling factor EcfA family. Forms a stable energy-coupling factor (ECF) transporter complex composed of 2 membrane-embedded substrate-binding proteins (S component), 2 ATP-binding proteins (A component) and 2 transmembrane proteins (T component).

The protein localises to the cell membrane. In terms of biological role, ATP-binding (A) component of a common energy-coupling factor (ECF) ABC-transporter complex. Unlike classic ABC transporters this ECF transporter provides the energy necessary to transport a number of different substrates. In Enterococcus faecium (Streptococcus faecium), this protein is Energy-coupling factor transporter ATP-binding protein EcfA.